We begin with the raw amino-acid sequence, 238 residues long: Ribonuclease PH (238 aa).

Residues Arg86 and Gly124–Arg126 each bind phosphate.

Belongs to the RNase PH family. As to quaternary structure, homohexameric ring arranged as a trimer of dimers.

The enzyme catalyses tRNA(n+1) + phosphate = tRNA(n) + a ribonucleoside 5'-diphosphate. Functionally, phosphorolytic 3'-5' exoribonuclease that plays an important role in tRNA 3'-end maturation. Removes nucleotide residues following the 3'-CCA terminus of tRNAs; can also add nucleotides to the ends of RNA molecules by using nucleoside diphosphates as substrates, but this may not be physiologically important. Probably plays a role in initiation of 16S rRNA degradation (leading to ribosome degradation) during starvation. This chain is Ribonuclease PH, found in Citrobacter koseri (strain ATCC BAA-895 / CDC 4225-83 / SGSC4696).